Here is a 649-residue protein sequence, read N- to C-terminus: Mediator of RNA polymerase II transcription subunit 17 (649 aa).

Residues 51-79 (QGSGSEEEEAAGPDGDAPDWGGAGADQDD) are disordered.

It belongs to the Mediator complex subunit 17 family. In terms of assembly, component of the Mediator complex, which is composed of MED1, MED4, MED6, MED7, MED8, MED9, MED10, MED11, MED12, MED13, MED13L, MED14, MED15, MED16, MED17, MED18, MED19, MED20, MED21, MED22, MED23, MED24, MED25, MED26, MED27, MED29, MED30, MED31, CCNC, CDK8 and CDC2L6/CDK11. The MED12, MED13, CCNC and CDK8 subunits form a distinct module termed the CDK8 module. Mediator containing the CDK8 module is less active than Mediator lacking this module in supporting transcriptional activation. Individual preparations of the Mediator complex lacking one or more distinct subunits have been variously termed ARC, CRSP, DRIP, PC2, SMCC and TRAP. Interacts with STAT2. Interacts with GATA1 and PPARG.

The protein resides in the nucleus. Component of the Mediator complex, a coactivator involved in the regulated transcription of nearly all RNA polymerase II-dependent genes. Mediator functions as a bridge to convey information from gene-specific regulatory proteins to the basal RNA polymerase II transcription machinery. Mediator is recruited to promoters by direct interactions with regulatory proteins and serves as a scaffold for the assembly of a functional preinitiation complex with RNA polymerase II and the general transcription factors. The protein is Mediator of RNA polymerase II transcription subunit 17 (Med17) of Mus musculus (Mouse).